We begin with the raw amino-acid sequence, 1076 residues long: Bifunctional glutamine synthetase adenylyltransferase/adenylyl-removing enzyme (1076 aa).

Residues 1-521 (MESSIFKPSS…LHLDIYYRPM (521 aa)) form an adenylyl removase region. An adenylyl transferase region spans residues 524–1076 (VNAQMENDQI…LERNRRRAQR (553 aa)). Positions 1042–1056 (TATASAATQQPQTAP) are enriched in low complexity. Residues 1042–1076 (TATASAATQQPQTAPRPRMHVIAPRLERNRRRAQR) form a disordered region.

This sequence belongs to the GlnE family. Mg(2+) serves as cofactor.

It carries out the reaction [glutamine synthetase]-O(4)-(5'-adenylyl)-L-tyrosine + phosphate = [glutamine synthetase]-L-tyrosine + ADP. It catalyses the reaction [glutamine synthetase]-L-tyrosine + ATP = [glutamine synthetase]-O(4)-(5'-adenylyl)-L-tyrosine + diphosphate. Its function is as follows. Involved in the regulation of glutamine synthetase GlnA, a key enzyme in the process to assimilate ammonia. When cellular nitrogen levels are high, the C-terminal adenylyl transferase (AT) inactivates GlnA by covalent transfer of an adenylyl group from ATP to specific tyrosine residue of GlnA, thus reducing its activity. Conversely, when nitrogen levels are low, the N-terminal adenylyl removase (AR) activates GlnA by removing the adenylyl group by phosphorolysis, increasing its activity. The regulatory region of GlnE binds the signal transduction protein PII (GlnB) which indicates the nitrogen status of the cell. This chain is Bifunctional glutamine synthetase adenylyltransferase/adenylyl-removing enzyme, found in Bifidobacterium longum (strain NCC 2705).